A 1020-amino-acid chain; its full sequence is MRSSCCDMCSQEEFQAQRSQLVALLISGSLEGFESILDWLLSWDVLSREDYEGLSLPGQPLSHSARRLLDTVWNKGVWGCQKLLEAVQEAQANSHTFELYGSWDTHSLHPTRDLQSHRPAIVRRLYNHVEAMLELAREGGFLSQYECEEIRLPIFTSSQRARRLLDLAAVKANGLAAFLLQHVRELPAPLPLPYEAAECQKFISKLRTMVLTQSRFLSTYDGSENLCLEDIYTENILELQTEVGTAGALQKSPAILGLEDLFDTHGHLNRDADTILVVGEAGSGKSTLLQRLHLLWATGRSFQEFLFIFPFSCRQLQCVAKPLSLRTLLFEHCCWPDVAQDDVFQFLLDHPDRVLLTFDGLDEFKFRFTDRERHCSPIDPTSVQTLLFNLLQGNLLKNACKVLTSRPDAVSALLRKFVRTELQLKGFSEEGIQLYLRKHHREPGVADRLIQLIQATSALHGLCHLPVFSWMVSRCHRELLLQNRGFPTTSTDMYLLILQHFLLHASPPDSSPLGLGPGLLQSRLSTLLHLGHLALRGLAMSCYVFSAQQLQAAQVDSDDISLGFLVRAQSSVPGSKAPLEFLHITFQCFFAAFYLAVSADTSVASLKHLFSCGRLGSSLLGRLLPNLCIQGSRVKKGSEAALLQKAEPHNLQITAAFLAGLLSQQHRDLLAACQVSERVLLQRQARARSCLAHSLREHFHSIPPAVPGETKSMHAMPGFIWLIRSLYEMQEEQLAQEAVRRLDIGHLKLTFCRVGPAECAALAFVLQHLQRPVALQLDYNSVGDVGVEQLRPCLGVCTALYLRDNNISDRGARTLVECALRCEQLQKLALFNNKLTDACACSMAKLLAHKQNFLSLRVGNNHITAAGAEVLAQGLKSNTSLKFLGFWGNSVGDKGTQALAEVVADHQNLKWLSLVGNNIGSMGAEALALMLEKNKSLEELCLEENHICDEGVYSLAEGLKRNSTLKFLKLSNNGITYRGAEALLQALSRNSAILEVWLRGNTFSLEEIQTLSSRDARLLL.

CARD domains follow at residues 6–104 (CDMC…GSWD) and 106–200 (HSLH…AECQ). The ATG16L1-binding motif motif lies at 43-57 (WDVLSREDYEGLSLP). ADP is bound by residues Thr-219, Tyr-232, Thr-233, Gly-282, Ser-283, Gly-284, Lys-285, Ser-286, and Thr-287. The interval 221–254 (DGSENLCLEDIYTENILELQTEVGTAGALQKSPA) is required for CARD9 binding. The region spanning 273–600 (DTILVVGEAG…AAFYLAVSAD (328 aa)) is the NACHT domain. Cys-375 is lipidated: S-palmitoyl cysteine. An ADP-binding site is contributed by His-583. LRR repeat units follow at residues 685-709 (ARARSCLAHSLREHFHSIPPAVPGE), 726-749 (LYEMQEEQLAQEAVRRLDIGHLKL), 766-792 (LQHLQRPVALQLDYNSVGDVGVEQLRP), 794-817 (LGVCTALYLRDNNISDRGARTLVE), 822-845 (CEQLQKLALFNNKLTDACACSMAK), 850-873 (KQNFLSLRVGNNHITAAGAEVLAQ), 906-929 (HQNLKWLSLVGNNIGSMGAEALAL), 934-962 (NKSLEELCLEENHICDEGVYSLAEGLKRN), 963-985 (STLKFLKLSNNGITYRGAEALLQ), and 1005-1019 (LEEIQTLSSRDARLL).

Belongs to the NOD1-NOD2 family. Homooligomer: homooligomerizes following muramyl dipeptide (MDP)-binding, promoting RIPK2 recruitment. Interacts (via CARD domain) with RIPK2 (via CARD domain). Following RIPK2 recruitment, RIPK2 homooligomerizes via its CARD domain and forms long filaments named RIPosomes. Interacts (via CARD domain) with ubiquitin; inhibiting interaction with RIPK2. Component of a signaling complex consisting of ARHGEF2, NOD2 and RIPK2. Interacts with ANKRD17 (via N-terminus). Interacts with HSPA1A; the interaction enhances NOD2 stability. Interacts (via both CARD domains) with HSP90; the interaction enhances NOD2 stability. Interacts (via CARD domain) with SOCS3; the interaction promotes NOD2 degradation. Interacts (via CARD domain) with ERBIN; the interaction inhibits activation of NOD2. Interacts with MAPKBP1; the interaction is enhanced in the presence of muramyl dipeptide (MDP) and inhibits NOD2 homooligomerization and activation. Interacts with INAVA; the interaction takes place upon Pattern recognition receptor (PRR) stimulation. Interacts (via NACHT domain) with CARD9. Interacts (via CARD domain) with CASP1; this interaction leads to IL1B processing. Also interacts with CASP4. Interacts with NLRP1; this interaction is enhanced in the presence of muramyl dipeptide (MDP) and leads to increased IL1B release. Interacts with NLRP12; this interaction promotes degradation of NOD2 through the ubiquitin-proteasome pathway. Interacts with ANKHD1, C10orf67, CHMP5, DOCK7, ENTR1, KRT15, LDOC1, PPP1R12C, PPP2R3B, TRIM41 and VIM. Interacts with MAVS; interaction takes place following single-stranded RNA (ssRNA)-binding. Interacts with ATG16L1. Interacts with Irgm1; promoting Irgm1 'Lys-63'-linked polyubiquitination, which is required for interactions with the core autophagy factors. Post-translationally, palmitoylated by ZDHHC5; palmitoylation is required for proper recruitment to the bacterial entry site and hence for proper signaling upon cognate peptidoglycan detection. Palmitoylation promotes localization to the cell membrane. Palmitoylation protects from SQSTM1/p62-dependent autophagic degradation. Polyubiquitinated by TRIM27, leading to proteasome-mediated degradation. Polyubiquitinated and degraded following muramyl dipeptide (MDP) stimulation, conferring MDP tolerance and preventing septic shock. In terms of processing, degraded via selective autophagy following interaction with Irgm1. Irgm1 promotes NOD2-RIPK2 RIPosome recruitment to autophagosome membranes, promoting their SQSTM1/p62-dependent autophagic degradation. Post-translationally, O-glycosylated by OGT, O-GlcNAcylation increases protein stability. As to expression, expressed in monocytes, macrophages, dendritic cells, hepatocytes, preadipocytes, epithelial cells of oral cavity, lung and intestine. In intestine, highly expressed in ileal Paneth cells of the crypt and in intestinal stem cells. Also expressed in neurons of several brain regions including the hypothalamus.

It localises to the cell membrane. Its subcellular location is the basolateral cell membrane. It is found in the cytoplasm. The protein localises to the mitochondrion. With respect to regulation, ADP-binding promotes an inactive closed conformation. In terms of biological role, pattern recognition receptor (PRR) that detects bacterial peptidoglycan fragments and other danger signals and plays an important role in gastrointestinal immunity. Specifically activated by muramyl dipeptide (MDP), a fragment of bacterial peptidoglycan found in every bacterial peptidoglycan type. NOD2 specifically recognizes and binds 6-O-phospho-MDP, the phosphorylated form of MDP, which is generated by NAGK. 6-O-phospho-MDP-binding triggers oligomerization that facilitates the binding and subsequent activation of the proximal adapter receptor-interacting RIPK2. Following recruitment, RIPK2 undergoes 'Met-1'- (linear) and 'Lys-63'-linked polyubiquitination by E3 ubiquitin-protein ligases XIAP, BIRC2, BIRC3 and the LUBAC complex, becoming a scaffolding protein for downstream effectors, triggering activation of the NF-kappa-B and MAP kinases signaling. This in turn leads to the transcriptional activation of hundreds of genes involved in immune response. Its ability to detect bacterial MDP plays a central role in maintaining the equilibrium between intestinal microbiota and host immune responses to control inflammation. An imbalance in this relationship results in dysbiosis, whereby pathogenic bacteria prevail on commensals, causing damage in the intestinal epithelial barrier as well as allowing bacterial invasion and inflammation. Acts as a regulator of appetite by sensing MDP in a subset of brain neurons: microbiota-derived MDP reach the brain, where they bind and activate NOD2 in inhibitory hypothalamic neurons, decreasing neuronal activity, thereby regulating satiety and body temperature. NOD2-dependent MDP-sensing of bacterial cell walls in the intestinal epithelial compartment contributes to sustained postnatal growth upon undernutrition. Also plays a role in antiviral response by acting as a sensor of single-stranded RNA (ssRNA) from viruses: upon ssRNA-binding, interacts with MAVS, leading to activation of interferon regulatory factor-3/IRF3 and expression of type I interferon. Also acts as a regulator of autophagy in dendritic cells via its interaction with ATG16L1, possibly by recruiting ATG16L1 at the site of bacterial entry. NOD2 activation in the small intestine crypt also contributes to intestinal stem cells survival and function: acts by promoting mitophagy via its association with ATG16L1. In addition to its main role in innate immunity, also regulates the adaptive immune system by acting as regulator of helper T-cell and regulatory T-cells (Tregs). Besides recognizing pathogens, also involved in the endoplasmic reticulum stress response: acts by sensing and binding to the cytosolic metabolite sphingosine-1-phosphate generated in response to endoplasmic reticulum stress, initiating an inflammation process that leads to activation of the NF-kappa-B and MAP kinases signaling. May also be involved in NLRP1 activation following activation by MDP, leading to CASP1 activation and IL1B release in macrophages. The chain is Nucleotide-binding oligomerization domain-containing protein 2 from Mus musculus (Mouse).